Consider the following 455-residue polypeptide: Peroxisomal membrane protein PEX3 (455 aa).

Positions 113–125 are enriched in polar residues; that stretch reads TVLSDDFSTSQEG. Positions 113 to 135 are disordered; it reads TVLSDDFSTSQEGAISEDTNKPP. The helical transmembrane segment at 155–171 threads the bilayer; that stretch reads FLTLIYCESLLIVFLHL.

The protein belongs to the peroxin-3 family. In terms of assembly, component of the peroxisomal docking complex, composed of at least PEX3, PEX13, PEX14 and PEX17. Component of the peroxisomal translocation complex, composed of at least PEX3, PEX2, PEX10 and PEX12. Interacts with PEX19. Interacts with the pexophagy receptor ATG30.

It localises to the peroxisome membrane. Peroxisomal membrane protein required for peroxisome biosynthesis. Shared component of both the peroxisomal docking complex and the peroxisomal translocation complex. The two types of peroxisomal matrix targeting signals, PTS1 and PTS2, are first recognized in the cytosol by their receptors PEX5 and PEX7, respectively, which then carry the cargo to the peroxisomal membrane. The peroxisomal targeting signal (PTS) receptor-cargo complexes interact with peroxisomal membrane protein (PMP) components of the docking complex. They have then additional downstream interactions with the translocation complex, leading to the transport of fully folded and oligomerized cargo into the peroxisome matrix. PEX3 acts as an anchoring site for PEX19 on the peroxisomal membrane and thus plays a crucial role in the assembly of the peroxisomal translocation complex. Is also essential for the interaction between the two complexes. Finally. PEX3 activates selective autophagy of peroxisomes (pexophagy) via interaction with the pexophagy receptor ATG30. The protein is Peroxisomal membrane protein PEX3 of Komagataella phaffii (strain GS115 / ATCC 20864) (Yeast).